A 280-amino-acid chain; its full sequence is 4-deoxy-L-threo-5-hexosulose-uronate ketol-isomerase (280 aa).

Residues His-198, His-200, Glu-205, and His-247 each contribute to the Zn(2+) site.

The protein belongs to the KduI family. The cofactor is Zn(2+).

It carries out the reaction 5-dehydro-4-deoxy-D-glucuronate = 3-deoxy-D-glycero-2,5-hexodiulosonate. The protein operates within glycan metabolism; pectin degradation; 2-dehydro-3-deoxy-D-gluconate from pectin: step 4/5. Functionally, catalyzes the isomerization of 5-dehydro-4-deoxy-D-glucuronate to 3-deoxy-D-glycero-2,5-hexodiulosonate. This chain is 4-deoxy-L-threo-5-hexosulose-uronate ketol-isomerase, found in Lachnospira eligens (strain ATCC 27750 / DSM 3376 / VPI C15-48 / C15-B4) (Eubacterium eligens).